Consider the following 290-residue polypeptide: 4-hydroxybenzoate octaprenyltransferase (290 aa).

6 helical membrane-spanning segments follow: residues 33–53, 99–119, 141–161, 213–233, 234–254, and 268–288; these read LWALWVASPGVPPLWILAVFV, LFVILVLLSFLLVLTLNVKTI, LPQVVLGAAFGWSIPMAFCAV, LIIGLLQIAVLALLGTVGWLN, GLGAFYYAGLAGAGALFIWQQ, and AFLNNNYVGLLVFIGLALSYL.

Belongs to the UbiA prenyltransferase family. The cofactor is Mg(2+).

It localises to the cell inner membrane. It catalyses the reaction all-trans-octaprenyl diphosphate + 4-hydroxybenzoate = 4-hydroxy-3-(all-trans-octaprenyl)benzoate + diphosphate. The protein operates within cofactor biosynthesis; ubiquinone biosynthesis. Catalyzes the prenylation of para-hydroxybenzoate (PHB) with an all-trans polyprenyl group. Mediates the second step in the final reaction sequence of ubiquinone-8 (UQ-8) biosynthesis, which is the condensation of the polyisoprenoid side chain with PHB, generating the first membrane-bound Q intermediate 3-octaprenyl-4-hydroxybenzoate. The polypeptide is 4-hydroxybenzoate octaprenyltransferase (Cronobacter sakazakii (strain ATCC BAA-894) (Enterobacter sakazakii)).